The chain runs to 380 residues: S-phase entry cyclin-6 (380 aa).

The segment at 63-91 is disordered; sequence PRGKLQRDSTHLEKTRKRQLSNDSTDPIE.

Belongs to the cyclin family. Cyclin AB subfamily.

Its function is as follows. Involved in G1/S and or S phase progression. Interacts with CDC28. The polypeptide is S-phase entry cyclin-6 (CLB6) (Saccharomyces cerevisiae (strain ATCC 204508 / S288c) (Baker's yeast)).